The primary structure comprises 264 residues: Short chain dehydrogenase/reductase nsrJ (264 aa).

The NADP(+) site is built by Ile-24, Asp-70, Asn-97, and Arg-130. Catalysis depends on proton donor residues Ser-146 and Ser-147. NADP(+)-binding residues include Tyr-161, Lys-165, and Thr-196. Catalysis depends on Tyr-161, which acts as the Proton acceptor. Lys-165 (lowers pKa of active site Tyr) is an active-site residue.

This sequence belongs to the short-chain dehydrogenases/reductases (SDR) family.

Its pathway is secondary metabolite biosynthesis. Functionally, short chain dehydrogenase/reductase; part of the gene cluster that mediates the biosynthesis of the tetrahydroxanthone dimer neosartorin, which exhibits antibacterial activity. The two different monomeric units appear to be synthesized by the same set of enzymes, among which the Baeyer-Villiger monooxygenase nsrF is the key enzyme for the divergence of the biosynthetic routes. The pathway begins with the synthesis of atrochrysone thioester by the polyketide synthase nsrB. The atrochrysone carboxyl ACP thioesterase nsrC then breaks the thioester bond and releases the atrochrysone carboxylic acid from AacuL. Atrochrysone carboxylic acid is decarboxylated by the decarboxylase nsrE, and oxidized by the anthrone oxygenase nsrD to yield emodin. Emodin is then reduced to emodin hydroquinone by the oxidoreductase nsrR. A-ring reduction by the short chain dehydrogenase nsrJ, dehydration by the scytalone dehydratase-like protein nsrI and probable spontaneous re-oxidation, results in overall deoxygenation to chrysophanol. The Baeyer-Villiger monooxygenase nsrF accepts chrysophanol as a substrate to insert one oxygen atom at two different positions to yield the precursors of both monomric units. NsrF is promiscuous/flexible in interacting with the 2 (non methylated and methylated) aromatic rings of chrysophanol, thus diverging the biosynthetic pathway at this point. After the hydrolysis of the lactones, methylesterification by the methyltransferase nsrG yields respectively moniliphenone and 2,2',6'-trihydroxy-4-methyl-6-methoxya-cyldiphenylmethanone. The next steps are the hydroxylation by the FAD-dependent monooxygenase nsrK, followed by isomerization by the monooxygenase nsrQ. The short chain dehydrogenase/reductase nsrO then catalyzes the C-5 ketoreduction to give the xanthone skeleton of blennolide C and 5-acetylblennolide A. The acetyltransferase nsrL has a strict substrate specificity and uses only blennolide A but not blennolide C to yield 5-acetylblennolide A as the single-acetylated product. In the final step of the biosynthesis, the heterodimerization of the 2 xanthones, blennolide C and 5-acetylblennolide A, is catalyzed by the cytochrome P450 monooxygenase nsrP. NsrP can utilize at least three different xanthones as its substrates to perform the dimerization reaction. The polypeptide is Short chain dehydrogenase/reductase nsrJ (Aspergillus novofumigatus (strain IBT 16806)).